The following is a 405-amino-acid chain: Prenyltransferase phqA (405 aa).

Dimethylallyl diphosphate contacts are provided by Tyr195, Lys262, and Gln332.

This sequence belongs to the tryptophan dimethylallyltransferase family.

Its pathway is alkaloid biosynthesis. In terms of biological role, prenyltransferase; part of the gene cluster that mediates the biosynthesis of paraherquamide, a fungal indole alkaloid that belongs to a family of natural products containing a characteristic bicyclo[2.2.2]diazaoctane core. The first steps in the biosynthesis of paraherquamide is the production of the beta-methyl-proline precursor from L-isoleucine. They require oxidation of a terminally hydroxylated L-isoleucine to the corresponding aldehyde by enzymes which have still to be identified. Spontaneous cyclization and dehydration would yield the 4-methyl pyrolline-5-carboxylic acid, which is then reduced by the pyrroline-5-carboxylate reductase phqD leading to the beta-methyl-proline precursor. The next step of paraherquamide biosynthesis involves coupling of beta-methyl-proline and L-tryptophan by the bimodular NRPS phqB, to produce a monooxopiperazine intermediate. The reductase (R) domain of phqB utilizes NADPH for hydride transfer to reduce the thioester bond of the T domain-tethered linear dipeptide to a hemithioaminal intermediate, which spontaneously cleaves the C-S bond to release the aldehyde product. This compound undergoes spontaneous cyclization and dehydration to give a dienamine which is reverse prenylated at C-2 by the reverse prenyltransferase phqJ. The other prenyltransferase present in the cluster, phqI may be a redundant gene in the pathway. During biosynthetic assembly, the key step to produce the polycyclic core is catalyzed by the bifunctional reductase and intramolecular [4+2] Diels-Alderase, phqE, resulting in formation of the [2.2.2] diazaoctane intermediate preparaherquamide. Following formation of preparaherquamide, an indole 2,3-epoxidation-initiated pinacol-like rearrangement is catalyzed by the phqK FAD-dependent monooxygenase. The prenyltransferase phqA, the cytochrome P450 monooxygenase phqL, and the FAD-linked oxidoreductase phqH (or the cytochrome P450 monooxygenase phqM), are proposed to be involved in the formation of the pyran ring. The FAD-dependent monooxygenase phqK is likely responsible for generation of the spiro-oxindole, and the N-methylation is likely mediated by the phqN methyltransferase leading to the isolable natural product paraherquamide F. However, the order of these biosynthetic steps has still to be determined. In late-stage paraherquamide biosynthesis, the third P450 monooxygenase, phqO, is probably responsible for the C-14 hydroxylation, transforming paraherquamide F to paraherquamide G, and paraherquamide E to the final product paraherquamide A. The expansion from the 6-membered ring pyran (in paraherquamides F and G) to the 7-membered dioxepin ring (in paraherquamides A and E) represents a poorly understood but intriguing process that probably involves the 2-oxoglutarate-dependent dioxygenase phqC. Finally, the remaining members of the paraherquamide cluster, including phqI as well as phqM (or phqH), do not have a clearly prescribed role and appear to be redundant. The sequence is that of Prenyltransferase phqA from Penicillium fellutanum.